A 362-amino-acid polypeptide reads, in one-letter code: UDP-N-acetylglucosamine--N-acetylmuramyl-(pentapeptide) pyrophosphoryl-undecaprenol N-acetylglucosamine transferase (362 aa).

UDP-N-acetyl-alpha-D-glucosamine-binding positions include 15-17 (TGG), asparagine 127, arginine 165, serine 191, isoleucine 247, 266-271 (ALTVSE), and glutamine 292.

The protein belongs to the glycosyltransferase 28 family. MurG subfamily.

Its subcellular location is the cell inner membrane. It catalyses the reaction di-trans,octa-cis-undecaprenyl diphospho-N-acetyl-alpha-D-muramoyl-L-alanyl-D-glutamyl-meso-2,6-diaminopimeloyl-D-alanyl-D-alanine + UDP-N-acetyl-alpha-D-glucosamine = di-trans,octa-cis-undecaprenyl diphospho-[N-acetyl-alpha-D-glucosaminyl-(1-&gt;4)]-N-acetyl-alpha-D-muramoyl-L-alanyl-D-glutamyl-meso-2,6-diaminopimeloyl-D-alanyl-D-alanine + UDP + H(+). It functions in the pathway cell wall biogenesis; peptidoglycan biosynthesis. Cell wall formation. Catalyzes the transfer of a GlcNAc subunit on undecaprenyl-pyrophosphoryl-MurNAc-pentapeptide (lipid intermediate I) to form undecaprenyl-pyrophosphoryl-MurNAc-(pentapeptide)GlcNAc (lipid intermediate II). The protein is UDP-N-acetylglucosamine--N-acetylmuramyl-(pentapeptide) pyrophosphoryl-undecaprenol N-acetylglucosamine transferase of Shewanella baltica (strain OS185).